The primary structure comprises 323 residues: tRNA dimethylallyltransferase (323 aa).

An ATP-binding site is contributed by 15–22 (GATGSGKT). Residue 17-22 (TGSGKT) coordinates substrate. Interaction with substrate tRNA regions lie at residues 40–43 (DSRQ) and 164–168 (QRLIR).

This sequence belongs to the IPP transferase family. Monomer. Requires Mg(2+) as cofactor.

It carries out the reaction adenosine(37) in tRNA + dimethylallyl diphosphate = N(6)-dimethylallyladenosine(37) in tRNA + diphosphate. Catalyzes the transfer of a dimethylallyl group onto the adenine at position 37 in tRNAs that read codons beginning with uridine, leading to the formation of N6-(dimethylallyl)adenosine (i(6)A). This is tRNA dimethylallyltransferase from Chloroherpeton thalassium (strain ATCC 35110 / GB-78).